Here is a 264-residue protein sequence, read N- to C-terminus: 3-methyl-2-oxobutanoate hydroxymethyltransferase (264 aa).

2 residues coordinate Mg(2+): Asp-45 and Asp-84. Residues 45 to 46 (DS), Asp-84, and Lys-112 each bind 3-methyl-2-oxobutanoate. Glu-114 contacts Mg(2+). Catalysis depends on Glu-181, which acts as the Proton acceptor.

This sequence belongs to the PanB family. As to quaternary structure, homodecamer; pentamer of dimers. Requires Mg(2+) as cofactor.

It is found in the cytoplasm. It carries out the reaction 3-methyl-2-oxobutanoate + (6R)-5,10-methylene-5,6,7,8-tetrahydrofolate + H2O = 2-dehydropantoate + (6S)-5,6,7,8-tetrahydrofolate. It participates in cofactor biosynthesis; (R)-pantothenate biosynthesis; (R)-pantoate from 3-methyl-2-oxobutanoate: step 1/2. Catalyzes the reversible reaction in which hydroxymethyl group from 5,10-methylenetetrahydrofolate is transferred onto alpha-ketoisovalerate to form ketopantoate. The sequence is that of 3-methyl-2-oxobutanoate hydroxymethyltransferase from Escherichia coli O8 (strain IAI1).